Reading from the N-terminus, the 544-residue chain is Chaperonin GroEL (544 aa).

ATP contacts are provided by residues 30–33 (TLGP), Lys-51, 87–91 (DGTTT), Gly-415, 481–483 (DAL), and Asp-497.

This sequence belongs to the chaperonin (HSP60) family. In terms of assembly, forms a cylinder of 14 subunits composed of two heptameric rings stacked back-to-back. Interacts with the co-chaperonin GroES.

The protein resides in the cytoplasm. It catalyses the reaction ATP + H2O + a folded polypeptide = ADP + phosphate + an unfolded polypeptide.. Functionally, together with its co-chaperonin GroES, plays an essential role in assisting protein folding. The GroEL-GroES system forms a nano-cage that allows encapsulation of the non-native substrate proteins and provides a physical environment optimized to promote and accelerate protein folding. This Chlamydia trachomatis serovar L2 (strain ATCC VR-902B / DSM 19102 / 434/Bu) protein is Chaperonin GroEL.